Consider the following 1053-residue polypeptide: Ubiquitin-like modifier-activating enzyme 6 (1053 aa).

M1 carries the N-acetylmethionine modification. R46 lines the ATP pocket. T54 is subject to Phosphothreonine. Residues A470 and D497 each contribute to the ATP site. Residues D499 and E502 each contribute to the Mg(2+) site. Residues N505, R508, Q509, and K521 each coordinate ATP. K544 bears the N6-acetyllysine mark. V545 is a binding site for ATP. Mg(2+) is bound at residue D569. Residue N570 participates in ATP binding. C625 (glycyl thioester intermediate) is an active-site residue. K729 carries the N6-acetyllysine modification. S737 bears the Phosphoserine mark.

This sequence belongs to the ubiquitin-activating E1 family. Forms a thioester with UBD in cells stimulated with tumor necrosis factor-alpha (TNFa) and interferon-gamma (IFNg).

The catalysed reaction is ATP + ubiquitin + [E1 ubiquitin-activating enzyme]-L-cysteine = AMP + diphosphate + S-ubiquitinyl-[E1 ubiquitin-activating enzyme]-L-cysteine.. Its pathway is protein modification; protein ubiquitination. Its function is as follows. Activates ubiquitin by first adenylating its C-terminal glycine residue with ATP, and thereafter linking this residue to the side chain of a cysteine residue in E1, yielding a ubiquitin-E1 thioester and free AMP. Specific for ubiquitin, does not activate ubiquitin-like peptides. Also activates UBD/FAT10 conjugation via adenylation of its C-terminal glycine. Differs from UBE1 in its specificity for substrate E2 charging. Does not charge cell cycle E2s, such as CDC34. Essential for embryonic development. The sequence is that of Ubiquitin-like modifier-activating enzyme 6 (Uba6) from Mus musculus (Mouse).